The chain runs to 228 residues: Octanoyltransferase (228 aa).

The BPL/LPL catalytic domain occupies 31-212 (GETDGILILL…KFSEVFGIHF (182 aa)). Residues 76-83 (RGGKITFH), 143-145 (AIG), and 156-158 (GIA) contribute to the substrate site. Residue C174 is the Acyl-thioester intermediate of the active site.

The protein belongs to the LipB family.

It localises to the cytoplasm. It catalyses the reaction octanoyl-[ACP] + L-lysyl-[protein] = N(6)-octanoyl-L-lysyl-[protein] + holo-[ACP] + H(+). It functions in the pathway protein modification; protein lipoylation via endogenous pathway; protein N(6)-(lipoyl)lysine from octanoyl-[acyl-carrier-protein]: step 1/2. Catalyzes the transfer of endogenously produced octanoic acid from octanoyl-acyl-carrier-protein onto the lipoyl domains of lipoate-dependent enzymes. Lipoyl-ACP can also act as a substrate although octanoyl-ACP is likely to be the physiological substrate. This Thermoanaerobacter sp. (strain X514) protein is Octanoyltransferase.